Consider the following 363-residue polypeptide: MAP kinase kinase skh1/pek1 (363 aa).

A Protein kinase domain is found at 79 to 343 (ILYMNSLGEG…PQKMLTHPWV (265 aa)). ATP-binding positions include 85 to 93 (LGEGVSGSV) and lysine 108. Aspartate 206 functions as the Proton acceptor in the catalytic mechanism. Residue serine 234 is modified to Phosphoserine. Position 238 is a phosphothreonine (threonine 238).

Belongs to the protein kinase superfamily. STE Ser/Thr protein kinase family. MAP kinase kinase subfamily.

It carries out the reaction L-seryl-[protein] + ATP = O-phospho-L-seryl-[protein] + ADP + H(+). The enzyme catalyses L-threonyl-[protein] + ATP = O-phospho-L-threonyl-[protein] + ADP + H(+). The catalysed reaction is L-tyrosyl-[protein] + ATP = O-phospho-L-tyrosyl-[protein] + ADP + H(+). Its activity is regulated as follows. Activated by mkh1. Involved in the mkh1 signal transduction pathway that plays a role in cell wall integrity. Activates spm1/pmk1 via phosphorylation. In Schizosaccharomyces pombe (strain 972 / ATCC 24843) (Fission yeast), this protein is MAP kinase kinase skh1/pek1 (skh1).